The sequence spans 348 residues: Phosphatidylglycerophosphate phosphatase 1, chloroplastic/mitochondrial (348 aa).

The transit peptide at 1-58 (MQTPSMAASTTSYYPIPKSFLLSPPRHKRNPNLISCSTKPICSPPPPSSSSSSPLQTT) directs the protein to the chloroplast and mitochondrion. The segment at 17–67 (PKSFLLSPPRHKRNPNLISCSTKPICSPPPPSSSSSSPLQTTTTHRSQKQN) is disordered. Residues 55 to 67 (LQTTTTHRSQKQN) are compositionally biased toward polar residues. A Phosphoryl acceptor motif is present at residues 184–188 (DKDNT).

It belongs to the HAD-like hydrolase superfamily. It depends on Mg(2+) as a cofactor. Mainly expressed in inflorescences (especially in pollen) and, to a lower extent, in leaves, stems and siliques, as well as, at low levels, in roots. Mostly expressed in hypocotyl, vasculatures, trichomes, guard cells and stigmas.

It is found in the plastid. It localises to the chloroplast. Its subcellular location is the mitochondrion. The enzyme catalyses a 1,2-diacyl-sn-glycero-3-phospho-(1'-sn-glycero-3'-phosphate) + H2O = a 1,2-diacyl-sn-glycero-3-phospho-(1'-sn-glycerol) + phosphate. Its pathway is phospholipid metabolism; phosphatidylglycerol biosynthesis; phosphatidylglycerol from CDP-diacylglycerol: step 2/2. In terms of biological role, phosphatidylglycerophosphate (PGP) phosphatase involved in the biosynthesis of phosphatidylglycerol (PG), a phosphoglycerolipid predominantly present in chloroplastic thylakoid membranes and which has important photosynthetic function; seems to use PGP 34:3, PGP 34:2 and PGP 34:1 as substrates. Required for thylakoid membranes development and chloroplast function. Necessary for normal cell growth. Required for root growth and columella cells organization. The sequence is that of Phosphatidylglycerophosphate phosphatase 1, chloroplastic/mitochondrial from Arabidopsis thaliana (Mouse-ear cress).